A 309-amino-acid chain; its full sequence is Foldase protein PrsA (309 aa).

An N-terminal signal peptide occupies residues 1–22 (MKTRSKLAAGFLTLMSVATLAA). A lipid anchor (N-palmitoyl cysteine) is attached at Cys-23. Cys-23 carries S-diacylglycerol cysteine lipidation. One can recognise a PpiC domain in the interval 146–241 (TPETSVQVIK…TSYYIIKVTD (96 aa)).

It belongs to the PrsA family.

It localises to the cell membrane. It carries out the reaction [protein]-peptidylproline (omega=180) = [protein]-peptidylproline (omega=0). Its function is as follows. Plays a major role in protein secretion by helping the post-translocational extracellular folding of several secreted proteins. This chain is Foldase protein PrsA, found in Streptococcus agalactiae serotype Ia (strain ATCC 27591 / A909 / CDC SS700).